A 345-amino-acid polypeptide reads, in one-letter code: DNA-directed RNA polymerases I and III subunit rpac1 (345 aa).

Polar residues predominate over residues 1-11 (MVNKSTTNGVS). Residues 1 to 20 (MVNKSTTNGVSDPNLENKRT) form a disordered region.

The protein belongs to the archaeal Rpo3/eukaryotic RPB3 RNA polymerase subunit family. Component of the RNA polymerase I (Pol I) and RNA polymerase III (Pol III) complexes consisting of at least 13 and 17 subunits, respectively. Interacts with RPAC19/RPAC2.

It localises to the nucleus. DNA-dependent RNA polymerase catalyzes the transcription of DNA into RNA using the four ribonucleoside triphosphates as substrates. Common component of RNA polymerases I and III which synthesize ribosomal RNA precursors and small RNAs, such as 5S rRNA and tRNAs, respectively. RPAC1 is part of the Pol core element with the central large cleft and probably a clamp element that moves to open and close the cleft. The polypeptide is DNA-directed RNA polymerases I and III subunit rpac1 (polr1c) (Dictyostelium discoideum (Social amoeba)).